Here is a 794-residue protein sequence, read N- to C-terminus: MNKVRPRYIIDRPAYSVELFNEEYEKKIRSYPIGGKARKLFSCSTSKIKNFIFRLFPILSWLPKYNIKGNLLNDALGGISAGTIQIPQGMAFALLANLPPVNGLYSSFFPLVVYFFMGGIPQMVPGTFAVISIIVGNVCLKLAPESHFQNVTSNGTITNIEAMNTARMHISATLACLTAIIQIALSFVQFGFVAIYLSESFIRGFMTAAGLQILISVLKYIFGVSIPPYSGVLAIIYTFIDICKELPKTNVASLIFALISTVLLIIVKELNMKFMHKIRFPIPMEIIIVIVATAVSGSFKLPERYHMNVVGHIPLGFPSPTVPNVTQWDEMVGTAFSLAIVGYVINLAMGRTLGAKHGFDVDANQEMLALGSGNFFGSFFFIHVICCALSVTLAVDGAGGKSQIASFFVMMSVMVTILALGTYLNPLPKSVLGALIAVNLKNSLKQLSDPFYLWKKSKLDCLVWLVSFFSTFILGLPYGLAVGVAFSILVVIFNTQFRNGSSLNQVTATDIYVNPKVYSKVQPIDGIKIVTYCSPLYFANSEIFRQKVIKKTGLDPGKVYLSKKKYLKQQEQELKKKEQKKKRGSLFMKNKTLSLQELQEDFDGVSPTDSNNNSTVNGTASAISYISSNTLTSGSQTTENVQNGFSTPAQTQDPIIAAPPIVNFHTVIIDMSGVCFVDLMGIKALGKLCTSFQRIGVNVYLADVQAQVYDDIENGGMFAEGSLDRKHLFITVHDAVLYAEANNTGIVNTDSKKKGAGDTEIYITDTQDEISEDYPNLEEAMFGSMFQTEIQTAL.

The Cytoplasmic segment spans residues 1-70 (MNKVRPRYII…WLPKYNIKGN (70 aa)). Residues 71–96 (LLNDALGGISAGTIQIPQGMAFALLA) form a helical membrane-spanning segment. Residues 97-100 (NLPP) lie on the Extracellular side of the membrane. The helical transmembrane segment at 101–109 (VNGLYSSFF) threads the bilayer. At 110–129 (PLVVYFFMGGIPQMVPGTFA) the chain is on the cytoplasmic side. Residues 130–142 (VISIIVGNVCLKL) form a helical membrane-spanning segment. Topologically, residues 143–160 (APESHFQNVTSNGTITNI) are extracellular. The chain crosses the membrane as a helical span at residues 161–189 (EAMNTARMHISATLACLTAIIQIALSFVQ). Topologically, residues 190-199 (FGFVAIYLSE) are cytoplasmic. The chain crosses the membrane as a helical span at residues 200-222 (SFIRGFMTAAGLQILISVLKYIF). The Extracellular portion of the chain corresponds to 223–235 (GVSIPPYSGVLAI). Residues 236–244 (IYTFIDICK) constitute an intramembrane region (helical). Residues 245-252 (ELPKTNVA) lie on the Extracellular side of the membrane. A helical membrane pass occupies residues 253 to 273 (SLIFALISTVLLIIVKELNMK). Residues 274–284 (FMHKIRFPIPM) are Cytoplasmic-facing. Residues 285 to 297 (EIIIVIVATAVSG) traverse the membrane as a helical segment. Topologically, residues 298 to 332 (SFKLPERYHMNVVGHIPLGFPSPTVPNVTQWDEMV) are extracellular. A helical transmembrane segment spans residues 333–356 (GTAFSLAIVGYVINLAMGRTLGAK). At 357-363 (HGFDVDA) the chain is on the cytoplasmic side. A helical membrane pass occupies residues 364 to 377 (NQEMLALGSGNFFG). Over 378-388 (SFFFIHVICCA) the chain is Extracellular. A helical transmembrane segment spans residues 389 to 398 (LSVTLAVDGA). Topologically, residues 399-403 (GGKSQ) are cytoplasmic. The helical transmembrane segment at 404–417 (IASFFVMMSVMVTI) threads the bilayer. Topologically, residues 418-429 (LALGTYLNPLPK) are extracellular. Residues 430–455 (SVLGALIAVNLKNSLKQLSDPFYLWK) traverse the membrane as a helical segment. The Cytoplasmic portion of the chain corresponds to 456–459 (KSKL). Residues 460-474 (DCLVWLVSFFSTFIL) traverse the membrane as a helical segment. Topologically, residues 475 to 477 (GLP) are extracellular. A helical membrane pass occupies residues 478–496 (YGLAVGVAFSILVVIFNTQ). Topologically, residues 497-794 (FRNGSSLNQV…MFQTEIQTAL (298 aa)) are cytoplasmic. The region spanning 517–739 (VYSKVQPIDG…ITVHDAVLYA (223 aa)) is the STAS domain.

It belongs to the SLC26A/SulP transporter (TC 2.A.53) family. Homodimer.

The protein localises to the cell membrane. Its subcellular location is the endomembrane system. It carries out the reaction chloride(in) = chloride(out). The enzyme catalyses hydrogencarbonate(in) + chloride(out) = hydrogencarbonate(out) + chloride(in). Its activity is regulated as follows. Inhibited by ammonium and thiosulfate. In terms of biological role, ion transporter that can act both as an ion channel and anion exchanger. Mainly acts as a chloride channel, which mediate uncoupled chloride anion transport in an alternate-access mechanism where a saturable binding site is alternately exposed to either one or the other side of the membrane. Also acts as a DIDS- and thiosulfate- sensitive anion exchanger the exchange of chloride for bicarbonate ions across the cell membrane. This is Solute carrier family 26 member 9 (slc26a9) from Xenopus tropicalis (Western clawed frog).